The following is a 465-amino-acid chain: Hepatocyte nuclear factor 6 (465 aa).

Disordered regions lie at residues 15-84 (GVSH…GPLH) and 119-141 (SDKF…HQRL). Positions 123 to 140 (PHHHHHHHHHHHPHHHQR) are enriched in basic residues. The CUT DNA-binding region spans 283 to 369 (GSNSGQMEEI…QRMSALRLAA (87 aa)). The homeobox DNA-binding region spans 385 to 444 (PKKPRLVFTDVQRRTLHAIFKENKRPSKELQITISQQLGLELSTVSNFFMNARRRSLDKW). A disordered region spans residues 442–465 (DKWQDEGSSNSGNSSSSSSTCTKA). Low complexity predominate over residues 448-465 (GSSNSGNSSSSSSTCTKA).

This sequence belongs to the CUT homeobox family. In terms of assembly, binds DNA as a monomer. As to expression, expressed in liver, brain, spleen and testis.

The protein resides in the nucleus. In terms of biological role, transcriptional activator. Binds the consensus sequence 5'-DHWATTGAYTWWD-3' on a variety of gene promoters such as those of HNF3B and TTR. Important for liver genes transcription. The affinity of HNF-6-alpha and HNF-6-beta for DNA differs depending on the target sequence. The chain is Hepatocyte nuclear factor 6 (Onecut1) from Rattus norvegicus (Rat).